Here is a 191-residue protein sequence, read N- to C-terminus: UPF0312 protein Sputcn32_2702 (191 aa).

The signal sequence occupies residues 1–22 (MKKQLLSALIGVSLLAPMAASA).

The protein belongs to the UPF0312 family. Type 1 subfamily.

The protein resides in the periplasm. In Shewanella putrefaciens (strain CN-32 / ATCC BAA-453), this protein is UPF0312 protein Sputcn32_2702.